The sequence spans 180 residues: SPbeta prophage-derived uncharacterized protein YosC (180 aa).

This chain is SPbeta prophage-derived uncharacterized protein YosC (yosC), found in Bacillus subtilis (strain 168).